Consider the following 467-residue polypeptide: Bifunctional protein GlmU (467 aa).

Residues 1–229 (MEKNTIILAA…FSESMGVNDR (229 aa)) are pyrophosphorylase. UDP-N-acetyl-alpha-D-glucosamine-binding positions include 8–11 (LAAG), K22, Q72, 77–78 (GT), 100–102 (SGD), G139, E154, N169, and N227. D102 lines the Mg(2+) pocket. N227 is a binding site for Mg(2+). The segment at 230–250 (LALSKATKVMQRRINEEHMVN) is linker. The N-acetyltransferase stretch occupies residues 251 to 467 (GVTIIDPENT…ALKAEEENNK (217 aa)). UDP-N-acetyl-alpha-D-glucosamine-binding residues include R332 and K350. H362 serves as the catalytic Proton acceptor. UDP-N-acetyl-alpha-D-glucosamine contacts are provided by Y365 and N376. Residues 385–386 (NY), S404, A422, and R439 each bind acetyl-CoA.

This sequence in the N-terminal section; belongs to the N-acetylglucosamine-1-phosphate uridyltransferase family. The protein in the C-terminal section; belongs to the transferase hexapeptide repeat family. In terms of assembly, homotrimer. It depends on Mg(2+) as a cofactor.

The protein localises to the cytoplasm. The catalysed reaction is alpha-D-glucosamine 1-phosphate + acetyl-CoA = N-acetyl-alpha-D-glucosamine 1-phosphate + CoA + H(+). The enzyme catalyses N-acetyl-alpha-D-glucosamine 1-phosphate + UTP + H(+) = UDP-N-acetyl-alpha-D-glucosamine + diphosphate. It participates in nucleotide-sugar biosynthesis; UDP-N-acetyl-alpha-D-glucosamine biosynthesis; N-acetyl-alpha-D-glucosamine 1-phosphate from alpha-D-glucosamine 6-phosphate (route II): step 2/2. It functions in the pathway nucleotide-sugar biosynthesis; UDP-N-acetyl-alpha-D-glucosamine biosynthesis; UDP-N-acetyl-alpha-D-glucosamine from N-acetyl-alpha-D-glucosamine 1-phosphate: step 1/1. Its pathway is bacterial outer membrane biogenesis; LPS lipid A biosynthesis. In terms of biological role, catalyzes the last two sequential reactions in the de novo biosynthetic pathway for UDP-N-acetylglucosamine (UDP-GlcNAc). The C-terminal domain catalyzes the transfer of acetyl group from acetyl coenzyme A to glucosamine-1-phosphate (GlcN-1-P) to produce N-acetylglucosamine-1-phosphate (GlcNAc-1-P), which is converted into UDP-GlcNAc by the transfer of uridine 5-monophosphate (from uridine 5-triphosphate), a reaction catalyzed by the N-terminal domain. The protein is Bifunctional protein GlmU of Pediococcus pentosaceus (strain ATCC 25745 / CCUG 21536 / LMG 10740 / 183-1w).